The primary structure comprises 280 residues: F-box only protein 27 (280 aa).

The 48-residue stretch at 20–67 (VLDLSRLPPELLLLVLSHVPPRTLLMHCRRVCRAWRALVDGQALWLLL) folds into the F-box domain. The FBA domain occupies 101-277 (FCALRPLGRN…VTNSSVIIRV (177 aa)).

Part of a SCF (SKP1-cullin-F-box) protein ligase complex. Interacts with SKP1 and CUL1. In terms of tissue distribution, detected in brain, heart and muscle.

Substrate-recognition component of the SCF (SKP1-CUL1-F-box protein)-type E3 ubiquitin ligase complex. Able to recognize and bind complex-type oligosaccharides. This Mus musculus (Mouse) protein is F-box only protein 27 (Fbxo27).